A 325-amino-acid chain; its full sequence is Tetraacyldisaccharide 4'-kinase (325 aa).

Residue 58–65 participates in ATP binding; the sequence is TVGGSGKT.

Belongs to the LpxK family.

It carries out the reaction a lipid A disaccharide + ATP = a lipid IVA + ADP + H(+). The protein operates within glycolipid biosynthesis; lipid IV(A) biosynthesis; lipid IV(A) from (3R)-3-hydroxytetradecanoyl-[acyl-carrier-protein] and UDP-N-acetyl-alpha-D-glucosamine: step 6/6. Functionally, transfers the gamma-phosphate of ATP to the 4'-position of a tetraacyldisaccharide 1-phosphate intermediate (termed DS-1-P) to form tetraacyldisaccharide 1,4'-bis-phosphate (lipid IVA). This chain is Tetraacyldisaccharide 4'-kinase, found in Coxiella burnetii (strain Dugway 5J108-111).